The sequence spans 210 residues: 3-hexulose-6-phosphate synthase 1 (210 aa).

It belongs to the HPS/KGPDC family. HPS subfamily.

The catalysed reaction is D-ribulose 5-phosphate + formaldehyde = D-arabino-hex-3-ulose 6-phosphate. Its pathway is one-carbon metabolism; formaldehyde assimilation via RuMP pathway; D-fructose 6-phosphate from D-ribulose 5-phosphate and formaldehyde: step 1/2. In terms of biological role, catalyzes the condensation of ribulose 5-phosphate with formaldehyde to form 3-hexulose 6-phosphate. This chain is 3-hexulose-6-phosphate synthase 1, found in Staphylococcus saprophyticus subsp. saprophyticus (strain ATCC 15305 / DSM 20229 / NCIMB 8711 / NCTC 7292 / S-41).